We begin with the raw amino-acid sequence, 367 residues long: Pre-small/secreted glycoprotein (367 aa).

The first 33 residues, Met1–Ser33, serve as a signal peptide directing secretion. Asn41 carries N-linked (GlcNAc...) asparagine; by host glycosylation. Disulfide bonds link Cys109-Cys136 and Cys122-Cys148. Residues Asn205, Asn239, Asn258, and Asn269 are each glycosylated (N-linked (GlcNAc...) asparagine; by host).

Belongs to the filoviruses glycoprotein family. As to quaternary structure, homodimer; disulfide-linked. The homodimers are linked by two disulfide bonds in a parallel orientation. In terms of assembly, monomer. In terms of processing, this precursor is processed into mature sGP and delta-peptide by host furin or furin-like proteases. The cleavage site corresponds to the furin optimal cleavage sequence [KR]-X-[KR]-R. N-glycosylated. Post-translationally, O-glycosylated.

Its subcellular location is the secreted. In terms of biological role, seems to possess an anti-inflammatory activity as it can reverse the barrier-decreasing effects of TNF alpha. Might therefore contribute to the lack of inflammatory reaction seen during infection in spite the of extensive necrosis and massive virus production. Does not seem to be involved in activation of primary macrophages. Does not seem to interact specifically with neutrophils. Viroporin that permeabilizes mammalian cell plasma membranes. It acts by altering permeation of ionic compounds and small molecules. This activity may lead to viral enterotoxic activity. The polypeptide is Pre-small/secreted glycoprotein (GP) (Reston ebolavirus (strain Siena/Philippine-92) (REBOV)).